A 186-amino-acid polypeptide reads, in one-letter code: Peptide deformylase (186 aa).

The Fe cation site is built by C113 and H156. The active site involves E157. H160 serves as a coordination point for Fe cation.

Belongs to the polypeptide deformylase family. The cofactor is Fe(2+).

It catalyses the reaction N-terminal N-formyl-L-methionyl-[peptide] + H2O = N-terminal L-methionyl-[peptide] + formate. Removes the formyl group from the N-terminal Met of newly synthesized proteins. Requires at least a dipeptide for an efficient rate of reaction. N-terminal L-methionine is a prerequisite for activity but the enzyme has broad specificity at other positions. The polypeptide is Peptide deformylase (Lactiplantibacillus plantarum (strain ATCC BAA-793 / NCIMB 8826 / WCFS1) (Lactobacillus plantarum)).